The sequence spans 1139 residues: GRIP and coiled-coil domain-containing protein (1139 aa).

The segment at 366-388 is disordered; the sequence is NDDSQINNNVSNKVNSPDDDPNT. Positions 369–380 are enriched in polar residues; sequence SQINNNVSNKVN. Coiled coils occupy residues 472–648 and 758–877; these read VTKL…INNE and LYIL…ETQQ. The tract at residues 1004-1024 is disordered; it reads NEQENDNNNNNNNNNNNNNVE. A compositionally biased stretch (low complexity) spans 1009–1022; it reads DNNNNNNNNNNNNN. Residues 1043–1084 are a coiled coil; the sequence is YKKIRKKLETYEILLNEQQEGKKKMTEEINSLKNQVKNYESI. One can recognise a GRIP domain in the interval 1084–1135; that stretch reads INGNYQHIIYQKNILSNFIAQIPSRIQVDDYVSVIFNSFNFSNQEIEAINIK.

In Plasmodium falciparum (isolate 3D7), this protein is GRIP and coiled-coil domain-containing protein.